The primary structure comprises 546 residues: Chaperonin GroEL 1 (546 aa).

Residues 29–32 (TIGP), 86–90 (DGTTT), glycine 413, 477–479 (NAA), and aspartate 493 each bind ATP. The segment at 523 to 546 (PAEPAPQDGHGHGHGHSHPQGPGF) is disordered.

Belongs to the chaperonin (HSP60) family. As to quaternary structure, forms a cylinder of 14 subunits composed of two heptameric rings stacked back-to-back. Interacts with the co-chaperonin GroES.

It is found in the cytoplasm. It catalyses the reaction ATP + H2O + a folded polypeptide = ADP + phosphate + an unfolded polypeptide.. Functionally, together with its co-chaperonin GroES, plays an essential role in assisting protein folding. The GroEL-GroES system forms a nano-cage that allows encapsulation of the non-native substrate proteins and provides a physical environment optimized to promote and accelerate protein folding. The chain is Chaperonin GroEL 1 from Frankia casuarinae (strain DSM 45818 / CECT 9043 / HFP020203 / CcI3).